The following is a 194-amino-acid chain: Heme transporter hrg-1 (194 aa).

Helical transmembrane passes span 45–65 (QIWIAWLGVSAGVMAGTVFAI), 71–91 (IAVTMCFISSGFATLVLHLHL), 113–133 (GATVSFLSFIAMVFCLVVAGI), and 143–163 (LMGANLWIAAVWFFMTSKWSA). The Di-leucine motif motif lies at 182 to 183 (LL).

Belongs to the HRG family. Specifically expressed in the intestinal cells in larvae and adults.

The protein localises to the endosome membrane. It is found in the lysosome membrane. In terms of biological role, heme transporter that regulates intracellular heme availability through the endosomal or lysosomal compartment. This is Heme transporter hrg-1 (hrg-1) from Caenorhabditis elegans.